We begin with the raw amino-acid sequence, 58 residues long: uncharacterized protein (58 aa).

Over residues 23–51 (TTTSTSTTTTSTTTSTTTSTTTTTTTTTT) the composition is skewed to low complexity. The segment at 23-58 (TTTSTSTTTTSTTTSTTTSTTTTTTTTTTKDFNTET) is disordered.

This is an uncharacterized protein from Dictyostelium discoideum (Social amoeba).